A 763-amino-acid chain; its full sequence is Endothelin-converting enzyme 2 (763 aa).

The Cytoplasmic portion of the chain corresponds to 1–60 (MNVALHELGGGGSMVEYKRAKLRDEESPEITVEGRATRDSLEVGFQKRTRQLFGSHTQLE). S27 bears the Phosphoserine mark. A helical; Signal-anchor for type II membrane protein transmembrane segment spans residues 61–81 (LVLAGLILVLAALLLGCLVAL). Over 82–763 (WVHRDPAHST…MNPGQLCEVW (682 aa)) the chain is Lumenal. Positions 91–763 (TCVTEACIRV…MNPGQLCEVW (673 aa)) constitute a Peptidase M13 domain. 5 cysteine pairs are disulfide-bonded: C92–C97, C115–C748, C123–C708, C179–C428, and C637–C760. Residues N159, N163, N204, N264, N309, N376, and N532 are each glycosylated (N-linked (GlcNAc...) asparagine). Zn(2+) is bound at residue H600. Residue E601 is part of the active site. Position 604 (H604) interacts with Zn(2+). 2 N-linked (GlcNAc...) asparagine glycosylation sites follow: N625 and N633. E660 lines the Zn(2+) pocket. The Proton donor role is filled by D664.

Belongs to the peptidase M13 family. Zn(2+) is required as a cofactor.

The protein resides in the golgi apparatus membrane. The protein localises to the cytoplasmic vesicle. It localises to the secretory vesicle membrane. The catalysed reaction is Hydrolysis of the 21-Trp-|-Val-22 bond in big endothelin to form endothelin 1.. Functionally, converts big endothelin-1 to endothelin-1. Also involved in the processing of various neuroendocrine peptides, including neurotensin, angiotensin I, substance P, proenkephalin-derived peptides, and prodynorphin-derived peptides. May play a role in amyloid-beta processing. This chain is Endothelin-converting enzyme 2, found in Mus musculus (Mouse).